We begin with the raw amino-acid sequence, 102 residues long: uncharacterized protein (102 aa).

Residues 1 to 22 (MKFKYGATLFSGFLGLSAILAA) form the signal peptide. A lipid anchor (N-palmitoyl cysteine) is attached at cysteine 23. Cysteine 23 is lipidated: S-diacylglycerol cysteine.

This sequence belongs to the MG185/MG260 family.

The protein resides in the cell membrane. This is an uncharacterized protein from Mycoplasma pneumoniae (strain ATCC 29342 / M129 / Subtype 1) (Mycoplasmoides pneumoniae).